A 409-amino-acid chain; its full sequence is Tyrosine--tRNA ligase (409 aa).

A 'HIGH' region motif is present at residues 54–63 (PTAPDIHLGH). Residues 238-242 (KMSKS) carry the 'KMSKS' region motif. ATP is bound at residue lysine 241. An S4 RNA-binding domain is found at 347–407 (QGILRILREA…GKRKFARVKL (61 aa)).

This sequence belongs to the class-I aminoacyl-tRNA synthetase family. TyrS type 2 subfamily. As to quaternary structure, homodimer.

Its subcellular location is the cytoplasm. The catalysed reaction is tRNA(Tyr) + L-tyrosine + ATP = L-tyrosyl-tRNA(Tyr) + AMP + diphosphate + H(+). Its function is as follows. Catalyzes the attachment of tyrosine to tRNA(Tyr) in a two-step reaction: tyrosine is first activated by ATP to form Tyr-AMP and then transferred to the acceptor end of tRNA(Tyr). In Bordetella parapertussis (strain 12822 / ATCC BAA-587 / NCTC 13253), this protein is Tyrosine--tRNA ligase.